Consider the following 414-residue polypeptide: Putative competence-damage inducible protein (414 aa).

It belongs to the CinA family.

In Listeria monocytogenes serotype 4a (strain HCC23), this protein is Putative competence-damage inducible protein.